Reading from the N-terminus, the 446-residue chain is Cytochrome P450 monooxygenase ptmP (446 aa).

The chain crosses the membrane as a helical span at residues 19–39 (VTVIWILMALVLLAYLILPNP). Heme is bound at residue cysteine 385. N-linked (GlcNAc...) asparagine glycosylation occurs at asparagine 430.

It belongs to the cytochrome P450 family. Heme serves as cofactor.

The protein localises to the membrane. It participates in secondary metabolite biosynthesis. Its function is as follows. Cytochrome P450 monooxygenase; part of the gene cluster that mediates the biosynthesis of the indole diterpenes penitrems. The geranylgeranyl diphosphate (GGPP) synthase ptmG catalyzes the first step in penitrem biosynthesis via conversion of farnesyl pyrophosphate and isopentyl pyrophosphate into geranylgeranyl pyrophosphate (GGPP). Condensation of indole-3-glycerol phosphate with GGPP by the prenyl transferase ptmC then forms 3-geranylgeranylindole (3-GGI). Epoxidation by the FAD-dependent monooxygenase ptmM leads to a epoxidized-GGI that is substrate of the terpene cyclase ptmB for cyclization to yield paspaline. Paspaline is subsequently converted to 13-desoxypaxilline by the cytochrome P450 monooxygenase ptmP, the latter being then converted to paxilline by the cytochrome P450 monooxygenase ptmQ. Paxilline is converted to beta-paxitriol via C-10 ketoreduction by the short-chain dehydrogenase ptmH which can be monoprenylated at the C-20 by the indole diterpene prenyltransferase ptmD. A two-step elimination (acetylation and elimination) process performed by the O-acetyltransferase ptmV and ptmI leads to the production of the prenylated form of penijanthine. The FAD-linked oxidoreductase ptmO then converts the prenylated form of penijanthine into PC-M5 which is in turn transformed into PC-M4 by the aromatic dimethylallyltransferase ptmE. Five sequential oxidative transformations performed by the cytochrome P450 monooxygenases ptmK, ptmU, ptmL, ptmN and ptmJ yield the various penitrem compounds. PtmK, ptmU and ptmM are involved in the formation of the key bicyclic ring of penitrem C via the formation of the intermediates secopenitrem D and penitrem D. PtmL catalyzes the epoxidation of penitrem D and C to yield penitrem B and F, respectively. PtmJ catalyzes the last benzylic hydroxylation to convert penitrem B to prenitrem E and penitrem F to penitrem A. This is Cytochrome P450 monooxygenase ptmP from Penicillium ochrochloron.